The chain runs to 260 residues: UPF0294 protein YPO1077/y3099/YP_2772 (260 aa).

The protein belongs to the UPF0294 family.

The protein localises to the cytoplasm. In Yersinia pestis, this protein is UPF0294 protein YPO1077/y3099/YP_2772.